A 139-amino-acid polypeptide reads, in one-letter code: Cellular retinoic acid-binding protein 2 (139 aa).

A Nuclear localization signal motif is present at residues 21–31; that stretch reads KALGVNMMMRK. Lys103 is covalently cross-linked (Glycyl lysine isopeptide (Lys-Gly) (interchain with G-Cter in SUMO)). Residue 134-136 participates in all-trans-retinoate binding; the sequence is RVY.

This sequence belongs to the calycin superfamily. Fatty-acid binding protein (FABP) family. In terms of assembly, interacts with importin alpha, RXR and RARA. In terms of processing, sumoylated in response to retinoic acid binding, sumoylation is critical for dissociation from ER and subsequent nuclear translocation.

The protein resides in the cytoplasm. It is found in the endoplasmic reticulum. It localises to the nucleus. In terms of biological role, transports retinoic acid to the nucleus. Regulates the access of retinoic acid to the nuclear retinoic acid receptors. In Rattus norvegicus (Rat), this protein is Cellular retinoic acid-binding protein 2 (Crabp2).